A 136-amino-acid polypeptide reads, in one-letter code: Large ribosomal subunit protein uL16c (136 aa).

The tract at residues 1–20 (MLSPKRTKFRKQHRGRMKGK) is disordered.

Belongs to the universal ribosomal protein uL16 family. Part of the 50S ribosomal subunit.

Its subcellular location is the plastid. The protein localises to the chloroplast. The sequence is that of Large ribosomal subunit protein uL16c from Brachypodium distachyon (Purple false brome).